Consider the following 546-residue polypeptide: MFS-type transporter patC (546 aa).

The segment covering 1-15 (MSIDASPSESVLESQ) has biased composition (polar residues). Residues 1–29 (MSIDASPSESVLESQTPDRVDESIPIKAE) are disordered. Basic and acidic residues predominate over residues 16-29 (TPDRVDESIPIKAE). Transmembrane regions (helical) follow at residues 41 to 61 (IVGF…LLYG), 89 to 109 (VGFT…YAIF), 113 to 133 (WLFL…GAAP), 143 to 163 (VWAG…ITIL), 171 to 191 (VYVG…PIIG), 203 to 223 (WSFY…VFLL), 245 to 265 (WVGT…IVFG), 277 to 297 (IALY…QYFC), 318 to 338 (LLLY…VYYI), 350 to 370 (GIMS…TILL), 379 to 399 (GYFI…AVLM), 416 to 436 (ILMG…PAIV), 447 to 467 (FMNI…SAIF), and 515 to 535 (VIVS…ALYV).

Belongs to the major facilitator superfamily. TCR/Tet family.

It localises to the vacuole membrane. It is found in the cell membrane. Its function is as follows. MFS-type transporter; part of the gene cluster that mediates the biosynthesis of patulin, an acetate-derived tetraketide mycotoxin produced by several fungal species that shows antimicrobial properties against several bacteria. May be involved in the secretion of E-ascladiol to be converted to patulin by the secreted patulin synthase patE. The chain is MFS-type transporter patC from Penicillium expansum (Blue mold rot fungus).